Reading from the N-terminus, the 207-residue chain is Small ribosomal subunit protein uS4 (207 aa).

A disordered region spans residues Lys-31–Gln-55. Polar residues predominate over residues Gly-42 to Gly-53. Residues Ser-97–Leu-157 enclose the S4 RNA-binding domain.

The protein belongs to the universal ribosomal protein uS4 family. Part of the 30S ribosomal subunit. Contacts protein S5. The interaction surface between S4 and S5 is involved in control of translational fidelity.

One of the primary rRNA binding proteins, it binds directly to 16S rRNA where it nucleates assembly of the body of the 30S subunit. In terms of biological role, with S5 and S12 plays an important role in translational accuracy. The polypeptide is Small ribosomal subunit protein uS4 (Paraburkholderia xenovorans (strain LB400)).